The chain runs to 447 residues: Naphthalene 1,2-dioxygenase system, large oxygenase component (447 aa).

The region spanning 37–135 (WLFLTHDSLI…IKKKCLGLKE (99 aa)) is the Rieske domain. [2Fe-2S] cluster-binding residues include C79, H81, C99, and H102. 3 residues coordinate Fe cation: H206, H211, and D360.

This sequence belongs to the bacterial ring-hydroxylating dioxygenase alpha subunit family. As to quaternary structure, the naphthalene dioxygenase (NDO) multicomponent enzyme system is composed of an electron transfer component and a dioxygenase component (iron sulfur protein (ISP)). The electron transfer component is composed of a ferredoxin reductase (NagAa) and a ferredoxin (NagAb), and the dioxygenase component is formed by a large alpha subunit (NagAc) and a small beta subunit (NagAd). Requires [2Fe-2S] cluster as cofactor. Fe(2+) is required as a cofactor.

It catalyses the reaction naphthalene + NADH + O2 + H(+) = (1R,2S)-1,2-dihydronaphthalene-1,2-diol + NAD(+). The protein operates within aromatic compound metabolism; naphthalene degradation. Functionally, component of the naphthalene dioxygenase (NDO) multicomponent enzyme system which catalyzes the incorporation of both atoms of molecular oxygen into naphthalene to form cis-(1R,2S)-dihydroxy-1,2-dihydronaphthalene. The alpha subunit has a catalytic role in the holoenzyme. Also able to use styrene as substrate. This chain is Naphthalene 1,2-dioxygenase system, large oxygenase component, found in Ralstonia sp.